Here is a 406-residue protein sequence, read N- to C-terminus: Tyrosine--tRNA ligase (406 aa).

Tyr-35 provides a ligand contact to L-tyrosine. The 'HIGH' region motif lies at 40 to 49 (PTADSLHVGH). Residues Tyr-168 and Gln-172 each contribute to the L-tyrosine site. A 'KMSKS' region motif is present at residues 228–232 (KMGKT). Lys-231 contacts ATP. Residues 340–404 (STVLDIIAKT…RGKKNYNKIE (65 aa)) enclose the S4 RNA-binding domain.

The protein belongs to the class-I aminoacyl-tRNA synthetase family. TyrS type 1 subfamily. In terms of assembly, homodimer.

Its subcellular location is the cytoplasm. It carries out the reaction tRNA(Tyr) + L-tyrosine + ATP = L-tyrosyl-tRNA(Tyr) + AMP + diphosphate + H(+). Functionally, catalyzes the attachment of tyrosine to tRNA(Tyr) in a two-step reaction: tyrosine is first activated by ATP to form Tyr-AMP and then transferred to the acceptor end of tRNA(Tyr). This Clostridium botulinum (strain Alaska E43 / Type E3) protein is Tyrosine--tRNA ligase.